A 346-amino-acid polypeptide reads, in one-letter code: MSKQSLVSRKNDHLDIVLDPTRAIAATGTGFGAFRFEHCALPELHLDQIDLQTALFGRRLRAPLLISSMTGGAARSAAINAHLAEAAQQLGIAMAVGSQRVALETAGDQGLTGQLRQLAPDILLLANFGAAQLVRGYGVDEARRAVEMIEGDALIVHLNPLQEAVQTGGDRDWRGVLQAIEALAARLPVPVVIKEVGAGISAAVARRLVDAGVAAIDVAGAGGTSWAAVEAARAADASQQAIAEAFADWGIPTAQALLAVRDACPNTPLIASGGIRDGVEAAKAICLGADLVGQAAGVLQAAMHSSEAVVSHFEVLIEQLRIACFCTGSADLAGLRQARLLQLSAC.

9–10 (RK) provides a ligand contact to substrate. FMN contacts are provided by residues S67, 68 to 70 (SMT), S98, and N127. A substrate-binding site is contributed by 98-100 (SQR). Q162 lines the substrate pocket. E163 is a Mg(2+) binding site. FMN contacts are provided by residues K194, T224, 274–276 (GIR), and 295–296 (AA).

The protein belongs to the IPP isomerase type 2 family. As to quaternary structure, homooctamer. Dimer of tetramers. Requires FMN as cofactor. It depends on NADPH as a cofactor. Mg(2+) serves as cofactor.

Its subcellular location is the cytoplasm. The catalysed reaction is isopentenyl diphosphate = dimethylallyl diphosphate. Involved in the biosynthesis of isoprenoids. Catalyzes the 1,3-allylic rearrangement of the homoallylic substrate isopentenyl (IPP) to its allylic isomer, dimethylallyl diphosphate (DMAPP). The polypeptide is Isopentenyl-diphosphate delta-isomerase (Stutzerimonas stutzeri (strain A1501) (Pseudomonas stutzeri)).